Here is a 486-residue protein sequence, read N- to C-terminus: Cardiolipin synthase A (486 aa).

2 consecutive transmembrane segments (helical) span residues 3–23 (TFYT…IAGV) and 38–58 (MAWL…YLSV). 2 PLD phosphodiesterase domains span residues 219–246 (MDLR…VDPR) and 399–426 (EGGL…DMRS). Catalysis depends on residues His224, Lys226, Asp231, His404, Lys406, and Asp411.

The protein belongs to the phospholipase D family. Cardiolipin synthase subfamily. ClsA sub-subfamily.

It is found in the cell inner membrane. It carries out the reaction 2 a 1,2-diacyl-sn-glycero-3-phospho-(1'-sn-glycerol) = a cardiolipin + glycerol. Its function is as follows. Catalyzes the reversible phosphatidyl group transfer from one phosphatidylglycerol molecule to another to form cardiolipin (CL) (diphosphatidylglycerol) and glycerol. The sequence is that of Cardiolipin synthase A from Salmonella arizonae (strain ATCC BAA-731 / CDC346-86 / RSK2980).